A 616-amino-acid polypeptide reads, in one-letter code: MALLQISEPGLSAAPHQRRLAAGIDLGTTNSLVATVRSGQAETLADHEGRHLLPSVVHYQQQGHSVGYDARTNAALDTANTISSVKRLMGRSLADIQQRYPHLPYQFQASENGLPMIETAAGLLNPVRVSADILKALAARATEALAGELDGVVITVPAYFDDAQRQGTKDAARLAGLHVLRLLNEPTAAAIAYGLDSGQEGVIAVYDLGGGTFDISILRLSRGVFEVLATGGDSALGGDDFDHLLADYIREQAGIPDRSDNRVQRELLDAAIAAKIALSDADSVTVNVAGWQGEISREQFNELIAPLVKRTLLACRRVLKDAGVEADEVMEVVMVGGSTRVPLVRERVGEFFGRPPLTSIDPDKVVAIGAAIQADILVGNKPDSEMLLLDVIPLSLGLETMGGLVEKVIPRNTTIPVARAQDFTTFKDGQTAMSIHVMQGERELVQDCRSLARFALRGIPALPAGGAHIRVTFQVDADGLLSVTAMEKSTGVEASIQVKPSYGLTDSEIASMIKDSMSYAEQDVKARMLAEQKVEAARVLESLHGALAADAALLSTAERQVIDDAAAHLSEVAQGDDVDAIEQAIKNVDKQTQDFAARRMDQSVRRALKGHSVDEV.

It belongs to the heat shock protein 70 family.

Its function is as follows. Chaperone involved in the maturation of iron-sulfur cluster-containing proteins. Has a low intrinsic ATPase activity which is markedly stimulated by HscB. Involved in the maturation of IscU. The chain is Chaperone protein HscA from Escherichia coli O17:K52:H18 (strain UMN026 / ExPEC).